Consider the following 296-residue polypeptide: uncharacterized protein (296 aa).

A helical membrane pass occupies residues 7-26; sequence CFSLVCALGASTYLLWRGWL.

The protein resides in the membrane. This is an uncharacterized protein from Treponema pallidum (strain Nichols).